The chain runs to 215 residues: Putative lipoprotein NMB1124/NMB1162 (215 aa).

A signal peptide spans 1 to 16 (MKPLILGLAAVLALSA). The N-palmitoyl cysteine moiety is linked to residue Cys-17. The S-diacylglycerol cysteine moiety is linked to residue Cys-17.

Its subcellular location is the cell membrane. The protein is Putative lipoprotein NMB1124/NMB1162 of Neisseria meningitidis serogroup B (strain ATCC BAA-335 / MC58).